The chain runs to 240 residues: Oxygen-insensitive NADPH nitroreductase (240 aa).

FMN is bound by residues 11-15 (HRSIR), Ser39, Gln67, 128-131 (YIGG), and 167-169 (KPR).

The protein belongs to the flavin oxidoreductase frp family. In terms of assembly, homodimer. FMN serves as cofactor.

In terms of biological role, catalyzes the reduction of nitroaromatic compounds using NADPH. Has a broad electron acceptor specificity. Reduces nitrofurazone by a ping-pong bi-bi mechanism possibly to generate a two-electron transfer product. The protein is Oxygen-insensitive NADPH nitroreductase (nfsA) of Salmonella typhimurium (strain LT2 / SGSC1412 / ATCC 700720).